The sequence spans 92 residues: Large ribosomal subunit protein uL24 (92 aa).

Belongs to the universal ribosomal protein uL24 family. In terms of assembly, part of the 50S ribosomal subunit.

Functionally, one of two assembly initiator proteins, it binds directly to the 5'-end of the 23S rRNA, where it nucleates assembly of the 50S subunit. Its function is as follows. One of the proteins that surrounds the polypeptide exit tunnel on the outside of the subunit. The sequence is that of Large ribosomal subunit protein uL24 from Opitutus terrae (strain DSM 11246 / JCM 15787 / PB90-1).